The primary structure comprises 590 residues: Interferon alpha/beta receptor 1 (590 aa).

The signal sequence occupies residues 1–26; that stretch reads MLAVVGAAALVLVAGAPWVLPSAAGG. The Extracellular segment spans residues 27-429; sequence ENLKPPENID…EKTRPGSFST (403 aa). Fibronectin type-III domains lie at 31-125, 127-226, 230-327, and 332-425; these read PPEN…PFYT, HMSP…TTVA, PVPG…FIDS, and LPPP…TRPG. Asn-43 carries an N-linked (GlcNAc...) asparagine glycan. Cys-78 and Cys-86 are joined by a disulfide. 3 N-linked (GlcNAc...) asparagine glycosylation sites follow: Asn-109, Asn-181, and Asn-214. Disulfide bonds link Cys-199–Cys-220 and Cys-284–Cys-292. 4 N-linked (GlcNAc...) asparagine glycosylation sites follow: Asn-314, Asn-370, Asn-409, and Asn-413. A disulfide bridge connects residues Cys-397 and Cys-419. The helical transmembrane segment at 430–449 threads the bilayer; the sequence is IWIITGLGVVFFSVMVLYAL. The Cytoplasmic segment spans residues 450–590; sequence RSVWKYLCHV…ALRTEPALLC (141 aa). The important for interaction with TYK2 stretch occupies residues 483–492; it reads VLLTAEEHTE. The segment at 514–545 is disordered; it reads DLRKYSSQTSQDSGNYSNEEEESVGTESGQAV. Lys-517 participates in a covalent cross-link: Glycyl lysine isopeptide (Lys-Gly) (interchain with G-Cter in ubiquitin). Positions 518–530 are enriched in polar residues; that stretch reads YSSQTSQDSGNYS. Phosphoserine is present on Ser-526.

This sequence belongs to the type II cytokine receptor family. Heterodimer with IFNAR2; forming the receptor for type I interferon. Interacts with TYK2. Interacts with STAT1 and STAT2. Interacts (serine-phosphorylated form) with FBXW11, the substrate recognition component of a SCF (SKP1-CUL1-F-box protein) E3 ubiquitin-protein ligase complex. 3Interacts with SHMT2; this promotes interaction with ABRAXAS2 and the BRISC complex. Interacts with TRIM10; this interaction prevents association between IFNAR1 and TYK2. Ubiquitinated. This leads to its internalization and lysosomal degradation. The 'Lys-63'-linked ubiquitin chains are cleaved off by the BRISC complex; this prevents receptor internalization and degradation. Probable ubiquitination sites have been identified in human, but are poorly conserved across species. In terms of processing, phosphorylated on serine residues in response to interferon binding; this promotes interaction with FBXW11 and ubiquitination.

It is found in the cell membrane. The protein resides in the late endosome. The protein localises to the lysosome. Its function is as follows. Together with IFNAR2, forms the heterodimeric receptor for type I interferons (including interferons alpha, beta, epsilon, omega and kappa). Type I interferon binding activates the JAK-STAT signaling cascade, and triggers tyrosine phosphorylation of a number of proteins including JAKs, TYK2, STAT proteins and the IFNR alpha- and beta-subunits themselves. STAT proteins are then phosphorylated by the JAKs, promoting their translocation into the nucleus to regulate expression of interferon-regulated genes. Can also act independently of IFNAR2: form an active IFNB1 receptor by itself and activate a signaling cascade that does not involve activation of the JAK-STAT pathway. The sequence is that of Interferon alpha/beta receptor 1 (Ifnar1) from Mus musculus (Mouse).